The primary structure comprises 188 residues: MVKIAIFASGSGSNFENIVEHVESGKLENIEVTALYTDHQNAFCIDRAKKHDIPVYINEPKQFDSKAAYEQHLVTLLNEDKVEWIILAGYMRLIGPDLLASFEGKILNIHPSLLPKYKGIDAIGQAYHSGDTITGSTVHYVDSGMDTGEIIEQRKCDIRPDDSKEQLEEKVKKLEYELYPSVIAKIVK.

N(1)-(5-phospho-beta-D-ribosyl)glycinamide is bound at residue 12–14; it reads GSN. Residues K66, 91 to 94, and N108 each bind (6R)-10-formyltetrahydrofolate; that span reads MRLI. H110 acts as the Proton donor in catalysis.

Belongs to the GART family.

It carries out the reaction N(1)-(5-phospho-beta-D-ribosyl)glycinamide + (6R)-10-formyltetrahydrofolate = N(2)-formyl-N(1)-(5-phospho-beta-D-ribosyl)glycinamide + (6S)-5,6,7,8-tetrahydrofolate + H(+). The protein operates within purine metabolism; IMP biosynthesis via de novo pathway; N(2)-formyl-N(1)-(5-phospho-D-ribosyl)glycinamide from N(1)-(5-phospho-D-ribosyl)glycinamide (10-formyl THF route): step 1/1. Catalyzes the transfer of a formyl group from 10-formyltetrahydrofolate to 5-phospho-ribosyl-glycinamide (GAR), producing 5-phospho-ribosyl-N-formylglycinamide (FGAR) and tetrahydrofolate. The sequence is that of Phosphoribosylglycinamide formyltransferase from Staphylococcus aureus (strain COL).